The primary structure comprises 377 residues: Compound eye opsin BCRH2 (377 aa).

Residues 1 to 53 (MTNATGPQMAYYGAASMDFGYPEGVSIVDFVRPEIKPYVHQHWYNYPPVNPMW) lie on the Extracellular side of the membrane. The N-linked (GlcNAc...) asparagine glycan is linked to asparagine 3. The chain crosses the membrane as a helical span at residues 54–78 (HYLLGVIYLFLGTVSIFGNGLVIYL). Topologically, residues 79-90 (FNKSAALRTPAN) are cytoplasmic. A helical membrane pass occupies residues 91 to 115 (ILVVNLALSDLIMLTTNVPFFTYNC). At 116 to 131 (FSGGVWMFSPQYCEIY) the chain is on the extracellular side. Cysteine 128 and cysteine 205 form a disulfide bridge. A helical transmembrane segment spans residues 132 to 151 (ACLGAITGVCSIWLLCMISF). The Cytoplasmic portion of the chain corresponds to 152–170 (DRYNIICNGFNGPKLTTGK). Residues 171–194 (AVVFALISWVIAIGCALPPFFGWG) form a helical membrane-spanning segment. Topologically, residues 195–218 (NYILEGILDSCSYDYLTQDFNTFS) are extracellular. A helical transmembrane segment spans residues 219–246 (YNIFIFVFDYFLPAAIIVFSYVFIVKAI). At 247 to 281 (FAHEAAMRAQAKKMNVSTLRSNEADAQRAEIRIAK) the chain is on the cytoplasmic side. The helical transmembrane segment at 282-305 (TALVNVSLWFICWTPYALISLKGV) threads the bilayer. Topologically, residues 306–313 (MGDTSGIT) are extracellular. Residues 314–338 (PLVSTLPALLAKSCSCYNPFVYAIS) traverse the membrane as a helical segment. Lysine 325 bears the N6-(retinylidene)lysine mark. The Cytoplasmic segment spans residues 339–377 (HPKYRLAITQHLPWFCVHETETKSNDDSQSNSTVAQDKA).

Belongs to the G-protein coupled receptor 1 family. Opsin subfamily. Post-translationally, phosphorylated on some or all of the serine and threonine residues present in the C-terminal region. As to expression, expressed in all of the seven retinular cells (R1-R7) forming the main rhabdom in each ommatidium.

It is found in the membrane. In terms of biological role, visual pigments are the light-absorbing molecules that mediate vision. They consist of an apoprotein, opsin, covalently linked to cis-retinal. This opsin produces visual pigments with maximal absorption in the blue-green region of the spectrum. This Hemigrapsus sanguineus (Asian shore crab) protein is Compound eye opsin BCRH2.